Consider the following 168-residue polypeptide: Large ribosomal subunit protein uL16 (168 aa).

It belongs to the universal ribosomal protein uL16 family.

In Thermofilum pendens (strain DSM 2475 / Hrk 5), this protein is Large ribosomal subunit protein uL16.